The primary structure comprises 386 residues: Signal transduction histidine-protein kinase/phosphatase DegS (386 aa).

The region spanning 188–384 is the Histidine kinase domain; it reads KLSREIHDGP…TIIISIPITT (197 aa). At histidine 194 the chain carries Phosphohistidine; by autocatalysis.

In terms of processing, autophosphorylated.

It localises to the cytoplasm. The catalysed reaction is ATP + protein L-histidine = ADP + protein N-phospho-L-histidine.. In terms of biological role, member of the two-component regulatory system DegS/DegU, which plays an important role in the transition growth phase. Acts as both a protein kinase that undergoes autophosphorylation and subsequently transfers the phosphate to DegU, and a protein phosphatase that dephosphorylates phospho-DegU. This is Signal transduction histidine-protein kinase/phosphatase DegS (degS) from Brevibacillus brevis (Bacillus brevis).